A 211-amino-acid polypeptide reads, in one-letter code: MTQAHLTVVDHPLVQHKLTLMRDKTTSTAGFRRLLREISLLLAYEVTRELEMTTIRIDTPLCEMEAPTLEGKKLALISILRAGNGLMDGILELIPAARVGFIGLYRDPETLQPVQYYSKVPKELDARMTIVVDPMLATGNSSVAAIDLLKAAGARNLRFLCLLASPEGVERMREAHPDVPIVTAALDERLDEHGYIVPGLGDAGDRMFGTK.

5-phospho-alpha-D-ribose 1-diphosphate contacts are provided by residues arginine 81, arginine 106, and 133-141 (DPMLATGNS). Residues isoleucine 196 and 201 to 203 (GDA) contribute to the uracil site. Aspartate 202 serves as a coordination point for 5-phospho-alpha-D-ribose 1-diphosphate.

The protein belongs to the UPRTase family. Mg(2+) serves as cofactor.

It carries out the reaction UMP + diphosphate = 5-phospho-alpha-D-ribose 1-diphosphate + uracil. The protein operates within pyrimidine metabolism; UMP biosynthesis via salvage pathway; UMP from uracil: step 1/1. With respect to regulation, allosterically activated by GTP. Catalyzes the conversion of uracil and 5-phospho-alpha-D-ribose 1-diphosphate (PRPP) to UMP and diphosphate. This is Uracil phosphoribosyltransferase from Paracoccus denitrificans (strain Pd 1222).